The chain runs to 156 residues: Small ribosomal subunit protein uS7 (156 aa).

The protein belongs to the universal ribosomal protein uS7 family. As to quaternary structure, part of the 30S ribosomal subunit. Contacts proteins S9 and S11.

In terms of biological role, one of the primary rRNA binding proteins, it binds directly to 16S rRNA where it nucleates assembly of the head domain of the 30S subunit. Is located at the subunit interface close to the decoding center, probably blocks exit of the E-site tRNA. The chain is Small ribosomal subunit protein uS7 from Campylobacter hominis (strain ATCC BAA-381 / DSM 21671 / CCUG 45161 / LMG 19568 / NCTC 13146 / CH001A).